A 200-amino-acid chain; its full sequence is MAEAADTEVQTTSLEPQARHIVYCGVCSLPPEYCEFGGTAKKCEEWLHENNPSMHQKLYSEETIAANLSTLSIQARERAAKDAAKKEAKAALVETRNQERKAAAKVQIKRVERNKRKHVTVIAGLEAHGLDNKKVAKELGKKFATGSSVTKNPAGGEEITVQGDVCEDVLEWLVEVHGKEVPEDNLEIVEDKKKKKAAAE.

Residues 106 to 177 (VQIKRVERNK…DVLEWLVEVH (72 aa)) form the SUI1 domain.

Belongs to the DENR family. Interacts with the 40S ribosomal subunit.

The protein localises to the cytoplasm. The protein is Translation machinery-associated protein 22 (TMA22) of Coccidioides immitis (strain RS) (Valley fever fungus).